The following is an 89-amino-acid chain: Small ribosomal subunit protein uS15 (89 aa).

This sequence belongs to the universal ribosomal protein uS15 family. Part of the 30S ribosomal subunit. Forms a bridge to the 50S subunit in the 70S ribosome, contacting the 23S rRNA.

Functionally, one of the primary rRNA binding proteins, it binds directly to 16S rRNA where it helps nucleate assembly of the platform of the 30S subunit by binding and bridging several RNA helices of the 16S rRNA. In terms of biological role, forms an intersubunit bridge (bridge B4) with the 23S rRNA of the 50S subunit in the ribosome. The protein is Small ribosomal subunit protein uS15 of Photorhabdus laumondii subsp. laumondii (strain DSM 15139 / CIP 105565 / TT01) (Photorhabdus luminescens subsp. laumondii).